The following is a 320-amino-acid chain: Methionyl-tRNA formyltransferase (320 aa).

Residue 114–117 (SLLP) participates in (6S)-5,6,7,8-tetrahydrofolate binding.

The protein belongs to the Fmt family.

The catalysed reaction is L-methionyl-tRNA(fMet) + (6R)-10-formyltetrahydrofolate = N-formyl-L-methionyl-tRNA(fMet) + (6S)-5,6,7,8-tetrahydrofolate + H(+). Functionally, attaches a formyl group to the free amino group of methionyl-tRNA(fMet). The formyl group appears to play a dual role in the initiator identity of N-formylmethionyl-tRNA by promoting its recognition by IF2 and preventing the misappropriation of this tRNA by the elongation apparatus. This Acinetobacter baumannii (strain SDF) protein is Methionyl-tRNA formyltransferase.